We begin with the raw amino-acid sequence, 262 residues long: uncharacterized protein (262 aa).

Residues Ile-5 to Gly-223 form the ABC transporter domain. Gly-37 to Thr-44 provides a ligand contact to ATP.

Belongs to the ABC transporter superfamily.

This is an uncharacterized protein from Methanocaldococcus jannaschii (strain ATCC 43067 / DSM 2661 / JAL-1 / JCM 10045 / NBRC 100440) (Methanococcus jannaschii).